A 125-amino-acid chain; its full sequence is Phosphoribosyl-AMP cyclohydrolase (125 aa).

Asp91 is a binding site for Mg(2+). Cys92 provides a ligand contact to Zn(2+). Positions 93 and 95 each coordinate Mg(2+). Zn(2+) is bound by residues Cys108 and Cys115.

This sequence belongs to the PRA-CH family. In terms of assembly, homodimer. Mg(2+) is required as a cofactor. Zn(2+) serves as cofactor.

It localises to the cytoplasm. It catalyses the reaction 1-(5-phospho-beta-D-ribosyl)-5'-AMP + H2O = 1-(5-phospho-beta-D-ribosyl)-5-[(5-phospho-beta-D-ribosylamino)methylideneamino]imidazole-4-carboxamide. It functions in the pathway amino-acid biosynthesis; L-histidine biosynthesis; L-histidine from 5-phospho-alpha-D-ribose 1-diphosphate: step 3/9. Functionally, catalyzes the hydrolysis of the adenine ring of phosphoribosyl-AMP. In Streptomyces griseus subsp. griseus (strain JCM 4626 / CBS 651.72 / NBRC 13350 / KCC S-0626 / ISP 5235), this protein is Phosphoribosyl-AMP cyclohydrolase.